The chain runs to 83 residues: Small ribosomal subunit protein bS21 (83 aa).

Residues 40-83 (TPMDERRRKARSASKRNKVKWRYSNKSEETASETAETPASAPEA) form a disordered region. Basic residues predominate over residues 47–62 (RKARSASKRNKVKWRY). Residues 71–83 (SETAETPASAPEA) are compositionally biased toward low complexity.

The protein belongs to the bacterial ribosomal protein bS21 family.

In Akkermansia muciniphila (strain ATCC BAA-835 / DSM 22959 / JCM 33894 / BCRC 81048 / CCUG 64013 / CIP 107961 / Muc), this protein is Small ribosomal subunit protein bS21.